The following is a 92-amino-acid chain: Conotoxin Ac8.1 (92 aa).

A signal peptide spans 1–19 (LKMGAMFVLLLLFTLASSQ). The propeptide occupies 20-44 (QEGDVQARKTSLKSDFYRALRQYDR). At Q45 the chain carries Pyrrolidone carboxylic acid.

Belongs to the conotoxin S superfamily. Contains 5 disulfide bonds. In terms of tissue distribution, expressed by the venom duct.

The protein resides in the secreted. The sequence is that of Conotoxin Ac8.1 from Conus achatinus (Little frog cone).